A 574-amino-acid chain; its full sequence is MDKYDKIIDLTKRRGFLWNSFEIYGGIAGFFDYGPLGAILKSSVINTWRKHYIINEGFYEIDSPTVNPYEVLKASGHVENFTDPLVECKSCLESFRADHIIEENIEVDTEGKTLNELQEMIEKNNIKCPKCGGEFKEVNTFNLMFATSIGPGGKRAAFMRPETAQGIFIQFKRISQFFRNKLPYGAVQIGKAYRNEISPRQGVIRLREFTQAEAEFFIDSRKKENFEKFESVKDLILPLLPGKNQENESLSSEEKIVRMSLGDAVKNKIIAHEAIAYYIAVTKKFLMDIGIDETKLRFRQHLPNEMAHYAADCWDAELYTDRYGWIECVGIADRTDYDLRAHMKNSGEDLSVFVEFDESKEIEVYEIELNYKLVGKTFKGDAKILEESLKELSNDKMEELIKTLKNNEKYILKTCKRDFEVLNEYLTVKKVKKNVTGEKIVPHVIEPSYGIDRITYCVIEHAFKEEDDRTLLAFVNTVSPVKVGVFPLVNKEGMDEIAENLKNKFRKNGIIAEYDDSGAIGRRYMRMDEIGTPFCVTVDGETLKDNTVTIRERDSREQFRIPLDGVVDYIKEKL.

Residues Arg96 and Glu162 each contribute to the substrate site. ATP is bound by residues 194-196 (RNE), 204-209 (IRLREF), 327-328 (EC), and 450-453 (GIDR). A substrate-binding site is contributed by 209 to 213 (FTQAE). 446-450 (EPSYG) contacts substrate.

Belongs to the class-II aminoacyl-tRNA synthetase family.

It is found in the cytoplasm. It catalyses the reaction tRNA(Gly) + glycine + ATP = glycyl-tRNA(Gly) + AMP + diphosphate. In terms of biological role, catalyzes the attachment of glycine to tRNA(Gly). In Methanococcus vannielii (strain ATCC 35089 / DSM 1224 / JCM 13029 / OCM 148 / SB), this protein is Glycine--tRNA ligase.